A 124-amino-acid chain; its full sequence is Astakine (124 aa).

An N-terminal signal peptide occupies residues 1-21 (MAVSSAVRMLSVACLVVSAAG). 5 disulfides stabilise this stretch: cysteine 28/cysteine 40, cysteine 34/cysteine 52, cysteine 39/cysteine 91, cysteine 62/cysteine 99, and cysteine 93/cysteine 106.

Belongs to the AVIT (prokineticin) family.

It localises to the secreted. Functionally, cytokine directly involved in hematopoiesis. In Penaeus monodon (Giant tiger prawn), this protein is Astakine.